The primary structure comprises 505 residues: ATP synthase subunit alpha (505 aa).

Gly171–Thr178 contacts ATP.

It belongs to the ATPase alpha/beta chains family. In terms of assembly, F-type ATPases have 2 components, CF(1) - the catalytic core - and CF(0) - the membrane proton channel. CF(1) has five subunits: alpha(3), beta(3), gamma(1), delta(1), epsilon(1). CF(0) has three main subunits: a(1), b(2) and c(9-12). The alpha and beta chains form an alternating ring which encloses part of the gamma chain. CF(1) is attached to CF(0) by a central stalk formed by the gamma and epsilon chains, while a peripheral stalk is formed by the delta and b chains.

It localises to the cell inner membrane. The enzyme catalyses ATP + H2O + 4 H(+)(in) = ADP + phosphate + 5 H(+)(out). Functionally, produces ATP from ADP in the presence of a proton gradient across the membrane. The alpha chain is a regulatory subunit. The protein is ATP synthase subunit alpha of Campylobacter fetus subsp. fetus (strain 82-40).